We begin with the raw amino-acid sequence, 381 residues long: Homoserine O-succinyltransferase (381 aa).

In terms of domain architecture, AB hydrolase-1 spans 45-360 (NAVLVCHALN…PHGHDAFLLD (316 aa)). S151 serves as the catalytic Nucleophile. R221 serves as a coordination point for substrate. Catalysis depends on residues D321 and H354. Position 355 (D355) interacts with substrate.

It belongs to the AB hydrolase superfamily. MetX family. Homodimer.

The protein resides in the cytoplasm. The catalysed reaction is L-homoserine + succinyl-CoA = O-succinyl-L-homoserine + CoA. It functions in the pathway amino-acid biosynthesis; L-methionine biosynthesis via de novo pathway; O-succinyl-L-homoserine from L-homoserine: step 1/1. Transfers a succinyl group from succinyl-CoA to L-homoserine, forming succinyl-L-homoserine. The sequence is that of Homoserine O-succinyltransferase from Burkholderia multivorans (strain ATCC 17616 / 249).